Consider the following 278-residue polypeptide: Small ribosomal subunit biogenesis GTPase RsgA (278 aa).

Positions 62–218 (KNTLVRPKVV…ICDTPGFNVI (157 aa)) constitute a CP-type G domain. Residues 112–115 (TKND) and 162–170 (GQSGVGKSS) contribute to the GTP site. Zn(2+) contacts are provided by Cys241, Cys246, His248, and Cys254.

Belongs to the TRAFAC class YlqF/YawG GTPase family. RsgA subfamily. In terms of assembly, monomer. Associates with 30S ribosomal subunit, binds 16S rRNA. The cofactor is Zn(2+).

It localises to the cytoplasm. In terms of biological role, one of several proteins that assist in the late maturation steps of the functional core of the 30S ribosomal subunit. Helps release RbfA from mature subunits. May play a role in the assembly of ribosomal proteins into the subunit. Circularly permuted GTPase that catalyzes slow GTP hydrolysis, GTPase activity is stimulated by the 30S ribosomal subunit. The chain is Small ribosomal subunit biogenesis GTPase RsgA from Mycoplasma pneumoniae (strain ATCC 29342 / M129 / Subtype 1) (Mycoplasmoides pneumoniae).